Consider the following 115-residue polypeptide: METKLVQSIVIKTEAKVSTVKYRKKVNGERREYKLYFVRFSKDASIKLEKMGVRKLKNVEIIYEDEKYVLGSMSVRIWSRTSNDNTALYGLTLPKPIGEKLAGKKVLVLAEIESK.

This is an uncharacterized protein from Acidianus convivator (ATV).